The following is a 254-amino-acid chain: 5-oxoprolinase subunit A (254 aa).

It belongs to the LamB/PxpA family. As to quaternary structure, forms a complex composed of PxpA, PxpB and PxpC.

It catalyses the reaction 5-oxo-L-proline + ATP + 2 H2O = L-glutamate + ADP + phosphate + H(+). Functionally, catalyzes the cleavage of 5-oxoproline to form L-glutamate coupled to the hydrolysis of ATP to ADP and inorganic phosphate. This chain is 5-oxoprolinase subunit A, found in Acinetobacter baumannii (strain AB307-0294).